The sequence spans 65 residues: UPF0434 protein bsr0601 (65 aa).

This sequence belongs to the UPF0434 family.

The protein is UPF0434 protein bsr0601 of Bradyrhizobium diazoefficiens (strain JCM 10833 / BCRC 13528 / IAM 13628 / NBRC 14792 / USDA 110).